Reading from the N-terminus, the 342-residue chain is UDP-3-O-(3-hydroxymyristoyl)glucosamine N-acyltransferase (342 aa).

Histidine 239 acts as the Proton acceptor in catalysis.

Belongs to the transferase hexapeptide repeat family. LpxD subfamily. Homotrimer.

It catalyses the reaction a UDP-3-O-[(3R)-3-hydroxyacyl]-alpha-D-glucosamine + a (3R)-hydroxyacyl-[ACP] = a UDP-2-N,3-O-bis[(3R)-3-hydroxyacyl]-alpha-D-glucosamine + holo-[ACP] + H(+). The enzyme catalyses UDP-3-O-[(3R)-3-hydroxytetradecanoyl]-alpha-D-glucosamine + (3R)-hydroxytetradecanoyl-[ACP] = UDP-2-N,3-O-bis[(3R)-3-hydroxytetradecanoyl]-alpha-D-glucosamine + holo-[ACP] + H(+). The protein operates within glycolipid biosynthesis; lipid IV(A) biosynthesis; lipid IV(A) from (3R)-3-hydroxytetradecanoyl-[acyl-carrier-protein] and UDP-N-acetyl-alpha-D-glucosamine: step 3/6. Its function is as follows. Catalyzes the N-acylation of UDP-3-O-(hydroxytetradecanoyl)glucosamine using 3-hydroxytetradecanoyl-ACP as the acyl donor. Is involved in the biosynthesis of lipid A, a phosphorylated glycolipid that anchors the lipopolysaccharide to the outer membrane of the cell. The polypeptide is UDP-3-O-(3-hydroxymyristoyl)glucosamine N-acyltransferase (Photorhabdus laumondii subsp. laumondii (strain DSM 15139 / CIP 105565 / TT01) (Photorhabdus luminescens subsp. laumondii)).